The primary structure comprises 347 residues: Two pore potassium channel a (347 aa).

Positions 1–11 (MDDNSIQQSLL) are enriched in polar residues. The segment at 1-49 (MDDNSIQQSLLADNPNVLQRKPSEGVNRFRRCRSTPSTDPLQGPPEKGS) is disordered. Residues 1-65 (MDDNSIQQSL…LFKEMRPSFR (65 aa)) are Cytoplasmic-facing. A helical transmembrane segment spans residues 66–86 (LVGLLLFIYLLVGVLAFYAVM). Positions 99–118 (DALYFCVVTMTTVGYGDLVP) form an intramembrane region, pore-forming. The chain crosses the membrane as a helical span at residues 125–145 (LLACAFVFMGMAVVALFVSKV). Over 146–183 (ADYLVEKQEVLFFKALHTNLKGGETKMLRAIETNRIKY) the chain is Cytoplasmic. Residues 184–204 (KFYTNALLLVLSIISGTVFLW) traverse the membrane as a helical segment. An intramembrane region (pore-forming) is located at residues 213-232 (DSFYCVCATITTLGYGDKSF). Residues 239–259 (VFAVFWIITSTIIMAQFFMYL) traverse the membrane as a helical segment. Over 260–347 (AEIYTERRQK…YDLTLAQSAQ (88 aa)) the chain is Cytoplasmic. EF-hand domains lie at 276–311 (LTRKMTKMDLEAADLDDDRQVGAAEFVVYKLKELGK) and 315–347 (EEISSFLEEFEKLDVDHSGTLSPYDLTLAQSAQ). Ca(2+)-binding residues include Asp289, Asp291, Asp293, Gln295, Glu300, Asp328, Asp330, Ser332, Thr334, and Asp339.

The protein belongs to the two pore domain potassium channel (TC 1.A.1.7) family. Homodimer.

The protein localises to the vacuole membrane. Its function is as follows. Highly selective inward-rectifying potassium channel that is specifically located in the tonoplast of large vacuoles. Functions independently of the voltage difference across the membrane. This chain is Two pore potassium channel a (TPKA), found in Oryza sativa subsp. japonica (Rice).